A 204-amino-acid chain; its full sequence is uncharacterized protein (204 aa).

Positions 109–136 (QFDIDVHKDQIEKLKDLYKALLRIAETT) form a coiled coil.

This is an uncharacterized protein from Bacillus subtilis (strain 168).